The primary structure comprises 72 residues: Translation initiation factor IF-1 (72 aa).

Positions 1-72 (MSKEDMIEFS…SKGRITFRFK (72 aa)) constitute an S1-like domain.

Belongs to the IF-1 family. Component of the 30S ribosomal translation pre-initiation complex which assembles on the 30S ribosome in the order IF-2 and IF-3, IF-1 and N-formylmethionyl-tRNA(fMet); mRNA recruitment can occur at any time during PIC assembly.

It is found in the cytoplasm. In terms of biological role, one of the essential components for the initiation of protein synthesis. Stabilizes the binding of IF-2 and IF-3 on the 30S subunit to which N-formylmethionyl-tRNA(fMet) subsequently binds. Helps modulate mRNA selection, yielding the 30S pre-initiation complex (PIC). Upon addition of the 50S ribosomal subunit IF-1, IF-2 and IF-3 are released leaving the mature 70S translation initiation complex. The protein is Translation initiation factor IF-1 of Gluconacetobacter diazotrophicus (strain ATCC 49037 / DSM 5601 / CCUG 37298 / CIP 103539 / LMG 7603 / PAl5).